Here is a 93-residue protein sequence, read N- to C-terminus: Probable endoribonuclease MazF1 (93 aa).

Belongs to the PemK/MazF family. In terms of assembly, forms a complex with cognate antitoxin MazE1.

Functionally, toxic component of a type II toxin-antitoxin (TA) system, its cognate antitoxin is MazE1. Probably an endoribonuclease. This Mycobacterium tuberculosis (strain ATCC 25618 / H37Rv) protein is Probable endoribonuclease MazF1 (mazF1).